A 209-amino-acid chain; its full sequence is Thymidine kinase (209 aa).

Residues 9–16 (AAMNAGKS) and 88–91 (DEAQ) contribute to the ATP site. The active-site Proton acceptor is the glutamate 89. Zn(2+)-binding residues include cysteine 146, cysteine 148, cysteine 183, and histidine 186.

Belongs to the thymidine kinase family. In terms of assembly, homotetramer.

Its subcellular location is the cytoplasm. The catalysed reaction is thymidine + ATP = dTMP + ADP + H(+). The protein is Thymidine kinase of Legionella pneumophila (strain Paris).